The sequence spans 216 residues: ATP-dependent dethiobiotin synthetase BioD (216 aa).

13–18 (EVGKTY) lines the ATP pocket. Threonine 17 is a binding site for Mg(2+). Lysine 38 is an active-site residue. Threonine 42 provides a ligand contact to substrate. Residues aspartate 47 and 112–115 (EGVG) contribute to the ATP site. Aspartate 47 and glutamate 112 together coordinate Mg(2+).

Belongs to the dethiobiotin synthetase family. As to quaternary structure, homodimer. The cofactor is Mg(2+).

It localises to the cytoplasm. The enzyme catalyses (7R,8S)-7,8-diammoniononanoate + CO2 + ATP = (4R,5S)-dethiobiotin + ADP + phosphate + 3 H(+). The protein operates within cofactor biosynthesis; biotin biosynthesis; biotin from 7,8-diaminononanoate: step 1/2. Catalyzes a mechanistically unusual reaction, the ATP-dependent insertion of CO2 between the N7 and N8 nitrogen atoms of 7,8-diaminopelargonic acid (DAPA, also called 7,8-diammoniononanoate) to form a ureido ring. The polypeptide is ATP-dependent dethiobiotin synthetase BioD (Endomicrobium trichonymphae).